Consider the following 512-residue polypeptide: MPFGCVTLGDKKNYNQPSEVTDRYDLGQVIKTEEFCEIFRAKDKTTGKLHTCKKFQKRDGRKVRKAAKNEIGILKMVKHPNILQLVDVFVTRKEYFIFLELATGREVFDWILDQGYYSERDTSNVVRQVLEAVAYLHSLKIVHRNLKLENLVYYNRLKNSKIVISDFHLAKLENGLIKEPCGTPEYLAPEVVGRQRYGRPVDCWAIGVIMYILLSGNPPFYEEVEEDDYENHDKNLFRKILAGDYEFDSPYWDDISQAAKDLVTRLMEVEQDQRITAEEAISHEWISGNAASDKNIKDGVCAQIEKNFARAKWKKAVRVTTLMKRLRAPEQSGTAATQSASDAATPGAAGGAIAAAAAAAAAGGAASASGASATAATEGGAGCAAKSDDIASADRSATPATDGSATPATDGSVTPATDGSITPATDGSVTPATDRSATPATDGRATPATEESTVPATQSSALPAAKAAATPEPAVAQPDSTALEGATGQAPPSSKGEEATGCAQESQRVETS.

The Protein kinase domain occupies 24–286; that stretch reads YDLGQVIKTE…AEEAISHEWI (263 aa). The tract at residues 328–347 is disordered; that stretch reads APEQSGTAATQSASDAATPG. A compositionally biased stretch (low complexity) spans 332–347; sequence SGTAATQSASDAATPG. The residue at position 392 (Ser392) is a Phosphoserine. Residues 393-512 are disordered; the sequence is ADRSATPATD…AQESQRVETS (120 aa). The span at 398-439 shows a compositional bias: polar residues; the sequence is TPATDGSATPATDGSVTPATDGSITPATDGSVTPATDRSATP. Thr446 is subject to Phosphothreonine. The segment covering 449–460 has biased composition (polar residues); sequence TEESTVPATQSS. Low complexity predominate over residues 461-478; that stretch reads ALPAAKAAATPEPAVAQP. Thr470 is modified (phosphothreonine).

It belongs to the protein kinase superfamily. CAMK Ser/Thr protein kinase family. Interacts with calmodulin, in the presence of calcium. Ca(2+) serves as cofactor.

The protein localises to the cell membrane. The protein resides in the cytoplasmic vesicle membrane. In terms of biological role, does not appear to have detectable kinase activity. The chain is CaM kinase-like vesicle-associated protein (Camkv) from Mus musculus (Mouse).